Reading from the N-terminus, the 575-residue chain is Transport inhibitor response 1-like protein Os04g0395600 (575 aa).

The 45-residue stretch at 1–45 (MTYFPEEVVEHIFSFLPAQRDRNTVSLVCKVWYEIERLSRRGVFV) folds into the F-box domain. Position 69 (Lys-69) interacts with 1D-myo-inositol hexakisphosphate. The tract at residues 76–77 (DF) is interaction with auxin-responsive proteins. Residues 108 to 109 (KR) and Arg-340 each bind 1D-myo-inositol hexakisphosphate. Positions 343–348 (PSDFYV) are interaction with auxin-responsive proteins. Residue 396 to 398 (RFR) participates in 1D-myo-inositol hexakisphosphate binding. The interaction with auxin-responsive proteins stretch occupies residues 400-404 (CILEP). Residue Arg-431 coordinates 1D-myo-inositol hexakisphosphate. The interval 459-460 (AF) is interaction with auxin-responsive proteins. 1D-myo-inositol hexakisphosphate is bound by residues 479–480 (RK) and Arg-504.

Part of a SCF (SKP1-cullin-F-box) protein ligase complex. May interact with auxin and auxin-responsive proteins.

Its subcellular location is the nucleus. Its pathway is protein modification; protein ubiquitination. This is Transport inhibitor response 1-like protein Os04g0395600 from Oryza sativa subsp. japonica (Rice).